A 69-amino-acid chain; its full sequence is Large ribosomal subunit protein bL31 (69 aa).

Zn(2+) contacts are provided by Cys-16, Cys-18, Cys-38, and Cys-41.

Belongs to the bacterial ribosomal protein bL31 family. Type A subfamily. Part of the 50S ribosomal subunit. It depends on Zn(2+) as a cofactor.

In terms of biological role, binds the 23S rRNA. The protein is Large ribosomal subunit protein bL31 of Cutibacterium acnes (strain DSM 16379 / KPA171202) (Propionibacterium acnes).